The primary structure comprises 86 residues: uncharacterized protein (86 aa).

This is an uncharacterized protein from Schizosaccharomyces pombe (strain 972 / ATCC 24843) (Fission yeast).